Consider the following 470-residue polypeptide: Cyclic AMP receptor-like protein D (470 aa).

Residues 1–16 (MSSCSSLSMDDRVKIG) lie on the Extracellular side of the membrane. Residues 17–37 (YGSIAGASLSIIGSIGTIILI) traverse the membrane as a helical segment. Topologically, residues 38 to 123 (KIRNKKQEKK…NNNQKTKVSH (86 aa)) are cytoplasmic. A helical membrane pass occupies residues 124 to 144 (FIINLSIANLLASIFMITIKL). Residues 145–176 (MMIHFNDKFIKVLPSTANHSFNALISVCTIGN) lie on the Extracellular side of the membrane. The N-linked (GlcNAc...) asparagine glycan is linked to Asn162. Cysteines 172 and 287 form a disulfide. The chain crosses the membrane as a helical span at residues 177 to 197 (GVIGFSFISTFFWTLAISMYI). Topologically, residues 198-253 (YQQFLSSSTINSNNNNNNINNINNNNNNNINNINNSKNNNSINNFNNSNKSNKIIK) are cytoplasmic. A helical membrane pass occupies residues 254–274 (MLFYFVCWVIPFVLGSILVSG). Residues 275-295 (SRLIELNSDLPWCSIDSNIQL) lie on the Extracellular side of the membrane. The helical transmembrane segment at 296–316 (ISFYFPLIICLLATTFFTILI) threads the bilayer. Topologically, residues 317 to 342 (KYKFSNDKLACSSSSLINLQSKIIQR) are cytoplasmic. A helical membrane pass occupies residues 343 to 363 (LILFLIVILVCWVPSLISFFI). Over 364–372 (SFFSKNCKQ) the chain is Extracellular. The chain crosses the membrane as a helical span at residues 373–393 (FLWLEIISSTIQSCQGILNFL). Residues 394–470 (SYLSIFKKLK…DFDNNQIQEK (77 aa)) are Cytoplasmic-facing.

This sequence belongs to the G-protein coupled receptor 5 family.

The protein localises to the membrane. Functionally, receptor for cAMP. This is Cyclic AMP receptor-like protein D (crlD) from Dictyostelium discoideum (Social amoeba).